Consider the following 528-residue polypeptide: Exodeoxyribonuclease 7 large subunit (528 aa).

Residues 486–528 are disordered; that stretch reads QGDRDAVIDGESSGVLPPSAAPAPTRPTPRPKPASSSDQGSLF. Residues 504-517 are compositionally biased toward pro residues; sequence SAAPAPTRPTPRPK.

Belongs to the XseA family. Heterooligomer composed of large and small subunits.

The protein localises to the cytoplasm. The enzyme catalyses Exonucleolytic cleavage in either 5'- to 3'- or 3'- to 5'-direction to yield nucleoside 5'-phosphates.. In terms of biological role, bidirectionally degrades single-stranded DNA into large acid-insoluble oligonucleotides, which are then degraded further into small acid-soluble oligonucleotides. This is Exodeoxyribonuclease 7 large subunit from Caulobacter sp. (strain K31).